The sequence spans 291 residues: Acetyl-coenzyme A carboxylase carboxyl transferase subunit beta (291 aa).

Residues 23-291 (VWHKCPSCTA…PPDLPVEESV (269 aa)) enclose the CoA carboxyltransferase N-terminal domain. The Zn(2+) site is built by Cys-27, Cys-30, Cys-46, and Cys-49. The segment at 27–49 (CPSCTAVLYRVELERNLEVCPKC) adopts a C4-type zinc-finger fold.

Belongs to the AccD/PCCB family. In terms of assembly, acetyl-CoA carboxylase is a heterohexamer composed of biotin carboxyl carrier protein (AccB), biotin carboxylase (AccC) and two subunits each of ACCase subunit alpha (AccA) and ACCase subunit beta (AccD). It depends on Zn(2+) as a cofactor.

The protein localises to the cytoplasm. The enzyme catalyses N(6)-carboxybiotinyl-L-lysyl-[protein] + acetyl-CoA = N(6)-biotinyl-L-lysyl-[protein] + malonyl-CoA. It participates in lipid metabolism; malonyl-CoA biosynthesis; malonyl-CoA from acetyl-CoA: step 1/1. Component of the acetyl coenzyme A carboxylase (ACC) complex. Biotin carboxylase (BC) catalyzes the carboxylation of biotin on its carrier protein (BCCP) and then the CO(2) group is transferred by the transcarboxylase to acetyl-CoA to form malonyl-CoA. The chain is Acetyl-coenzyme A carboxylase carboxyl transferase subunit beta from Coxiella burnetii (strain RSA 331 / Henzerling II).